We begin with the raw amino-acid sequence, 364 residues long: Protein-glutamate methylesterase/protein-glutamine glutaminase 1 (364 aa).

One can recognise a Response regulatory domain in the interval 6 to 123; sequence KVLCVDDSAL…RDGMLDYSEK (118 aa). D57 carries the post-translational modification 4-aspartylphosphate. The CheB-type methylesterase domain maps to 165–357; it reads LVSTEKLIIV…RRIMARLASM (193 aa). Active-site residues include S177, H203, and D299.

The protein belongs to the CheB family. In terms of processing, phosphorylated by CheA. Phosphorylation of the N-terminal regulatory domain activates the methylesterase activity.

It localises to the cytoplasm. It catalyses the reaction [protein]-L-glutamate 5-O-methyl ester + H2O = L-glutamyl-[protein] + methanol + H(+). The catalysed reaction is L-glutaminyl-[protein] + H2O = L-glutamyl-[protein] + NH4(+). Its function is as follows. Involved in chemotaxis. Part of a chemotaxis signal transduction system that modulates chemotaxis in response to various stimuli. Catalyzes the demethylation of specific methylglutamate residues introduced into the chemoreceptors (methyl-accepting chemotaxis proteins or MCP) by CheR. Also mediates the irreversible deamidation of specific glutamine residues to glutamic acid. This is Protein-glutamate methylesterase/protein-glutamine glutaminase 1 from Burkholderia mallei (strain ATCC 23344).